The primary structure comprises 376 residues: Succinyl-diaminopimelate desuccinylase (376 aa).

Residue His67 participates in Zn(2+) binding. Asp69 is an active-site residue. Residue Asp100 participates in Zn(2+) binding. Glu134 functions as the Proton acceptor in the catalytic mechanism. Zn(2+) contacts are provided by Glu135, Glu163, and His349.

It belongs to the peptidase M20A family. DapE subfamily. As to quaternary structure, homodimer. It depends on Zn(2+) as a cofactor. The cofactor is Co(2+).

The enzyme catalyses N-succinyl-(2S,6S)-2,6-diaminopimelate + H2O = (2S,6S)-2,6-diaminopimelate + succinate. Its pathway is amino-acid biosynthesis; L-lysine biosynthesis via DAP pathway; LL-2,6-diaminopimelate from (S)-tetrahydrodipicolinate (succinylase route): step 3/3. In terms of biological role, catalyzes the hydrolysis of N-succinyl-L,L-diaminopimelic acid (SDAP), forming succinate and LL-2,6-diaminopimelate (DAP), an intermediate involved in the bacterial biosynthesis of lysine and meso-diaminopimelic acid, an essential component of bacterial cell walls. This Xanthomonas campestris pv. campestris (strain B100) protein is Succinyl-diaminopimelate desuccinylase.